Reading from the N-terminus, the 116-residue chain is Ino eighty subunit 4 (116 aa).

The span at 1 to 15 (MSQESSVLSESQEQL) shows a compositional bias: low complexity. Disordered stretches follow at residues 1 to 40 (MSQE…PVLP) and 70 to 116 (EERQ…GLDS). Residues 84–108 (KGSDDKATRKKEPADEDPEVKQLEK) are compositionally biased toward basic and acidic residues.

In terms of assembly, component of the chromatin-remodeling INO80 complex, at least composed of ARP4, ARP5, ARP8, RVB1, RVB2, TAF14, NHP10, IES1, IES3, IES4, IES6, ACT1, IES2, IES5 and INO80.

The protein resides in the nucleus. The protein is Ino eighty subunit 4 (IES4) of Saccharomyces cerevisiae (strain ATCC 204508 / S288c) (Baker's yeast).